The following is a 167-amino-acid chain: 2-amino-4-hydroxy-6-hydroxymethyldihydropteridine pyrophosphokinase (167 aa).

This sequence belongs to the HPPK family.

It catalyses the reaction 6-hydroxymethyl-7,8-dihydropterin + ATP = (7,8-dihydropterin-6-yl)methyl diphosphate + AMP + H(+). The protein operates within cofactor biosynthesis; tetrahydrofolate biosynthesis; 2-amino-4-hydroxy-6-hydroxymethyl-7,8-dihydropteridine diphosphate from 7,8-dihydroneopterin triphosphate: step 4/4. Functionally, catalyzes the transfer of pyrophosphate from adenosine triphosphate (ATP) to 6-hydroxymethyl-7,8-dihydropterin, an enzymatic step in folate biosynthesis pathway. The polypeptide is 2-amino-4-hydroxy-6-hydroxymethyldihydropteridine pyrophosphokinase (folK) (Bacillus subtilis (strain 168)).